The sequence spans 244 residues: tRNA pseudouridine synthase A (244 aa).

Asp52 functions as the Nucleophile in the catalytic mechanism. Tyr110 provides a ligand contact to substrate.

The protein belongs to the tRNA pseudouridine synthase TruA family. In terms of assembly, homodimer.

It carries out the reaction uridine(38/39/40) in tRNA = pseudouridine(38/39/40) in tRNA. Its function is as follows. Formation of pseudouridine at positions 38, 39 and 40 in the anticodon stem and loop of transfer RNAs. This chain is tRNA pseudouridine synthase A, found in Clostridium acetobutylicum (strain ATCC 824 / DSM 792 / JCM 1419 / IAM 19013 / LMG 5710 / NBRC 13948 / NRRL B-527 / VKM B-1787 / 2291 / W).